The chain runs to 295 residues: tRNA-cytidine(32) 2-sulfurtransferase (295 aa).

The PP-loop motif signature appears at 59-64 (SGGKDS). 3 residues coordinate [4Fe-4S] cluster: C134, C137, and C225.

The protein belongs to the TtcA family. Homodimer. It depends on Mg(2+) as a cofactor. The cofactor is [4Fe-4S] cluster.

Its subcellular location is the cytoplasm. It carries out the reaction cytidine(32) in tRNA + S-sulfanyl-L-cysteinyl-[cysteine desulfurase] + AH2 + ATP = 2-thiocytidine(32) in tRNA + L-cysteinyl-[cysteine desulfurase] + A + AMP + diphosphate + H(+). It functions in the pathway tRNA modification. Functionally, catalyzes the ATP-dependent 2-thiolation of cytidine in position 32 of tRNA, to form 2-thiocytidine (s(2)C32). The sulfur atoms are provided by the cysteine/cysteine desulfurase (IscS) system. The polypeptide is tRNA-cytidine(32) 2-sulfurtransferase (Ruegeria sp. (strain TM1040) (Silicibacter sp.)).